The following is a 354-amino-acid chain: Hyaluronan and proteoglycan link protein 1 (354 aa).

The propeptide occupies 1–9 (MRSLLFLVL). The Ig-like V-type domain occupies 38 to 152 (PRLLVEAEQA…EGLEDDTAVV (115 aa)). The N-linked (GlcNAc...) asparagine glycan is linked to N56. Cystine bridges form between C61-C139, C181-C252, C205-C226, C279-C349, and C304-C325. Link domains follow at residues 159–254 (VVFP…FCFT) and 259–351 (GRFY…YCFR).

This sequence belongs to the HAPLN family.

Its subcellular location is the secreted. It localises to the extracellular space. It is found in the extracellular matrix. Stabilizes the aggregates of proteoglycan monomers with hyaluronic acid in the extracellular cartilage matrix. This is Hyaluronan and proteoglycan link protein 1 (Hapln1) from Rattus norvegicus (Rat).